The chain runs to 129 residues: Small ribosomal subunit protein uS11 (129 aa).

Belongs to the universal ribosomal protein uS11 family. Part of the 30S ribosomal subunit. Interacts with proteins S7 and S18. Binds to IF-3.

Its function is as follows. Located on the platform of the 30S subunit, it bridges several disparate RNA helices of the 16S rRNA. Forms part of the Shine-Dalgarno cleft in the 70S ribosome. This Enterobacter sp. (strain 638) protein is Small ribosomal subunit protein uS11.